The sequence spans 492 residues: Protein nucleotidyltransferase YdiU (492 aa).

The ATP site is built by Gly91, Gly93, Arg94, Lys114, Asp126, Gly127, Arg177, and Arg184. Asp253 serves as the catalytic Proton acceptor. Positions 254 and 263 each coordinate Mg(2+). Asp263 is a binding site for ATP.

The protein belongs to the SELO family. Requires Mg(2+) as cofactor. The cofactor is Mn(2+).

It catalyses the reaction L-seryl-[protein] + ATP = 3-O-(5'-adenylyl)-L-seryl-[protein] + diphosphate. The catalysed reaction is L-threonyl-[protein] + ATP = 3-O-(5'-adenylyl)-L-threonyl-[protein] + diphosphate. The enzyme catalyses L-tyrosyl-[protein] + ATP = O-(5'-adenylyl)-L-tyrosyl-[protein] + diphosphate. It carries out the reaction L-histidyl-[protein] + UTP = N(tele)-(5'-uridylyl)-L-histidyl-[protein] + diphosphate. It catalyses the reaction L-seryl-[protein] + UTP = O-(5'-uridylyl)-L-seryl-[protein] + diphosphate. The catalysed reaction is L-tyrosyl-[protein] + UTP = O-(5'-uridylyl)-L-tyrosyl-[protein] + diphosphate. In terms of biological role, nucleotidyltransferase involved in the post-translational modification of proteins. It can catalyze the addition of adenosine monophosphate (AMP) or uridine monophosphate (UMP) to a protein, resulting in modifications known as AMPylation and UMPylation. The chain is Protein nucleotidyltransferase YdiU from Maridesulfovibrio salexigens (strain ATCC 14822 / DSM 2638 / NCIMB 8403 / VKM B-1763) (Desulfovibrio salexigens).